The following is a 310-amino-acid chain: Lipoyl synthase (310 aa).

[4Fe-4S] cluster-binding residues include Cys-54, Cys-59, Cys-65, Cys-80, Cys-84, Cys-87, and Ser-295. The Radical SAM core domain maps to 66–284 (FASGTATFLI…LFGEDNLGFM (219 aa)).

The protein belongs to the radical SAM superfamily. Lipoyl synthase family. The cofactor is [4Fe-4S] cluster.

It is found in the cytoplasm. The catalysed reaction is [[Fe-S] cluster scaffold protein carrying a second [4Fe-4S](2+) cluster] + N(6)-octanoyl-L-lysyl-[protein] + 2 oxidized [2Fe-2S]-[ferredoxin] + 2 S-adenosyl-L-methionine + 4 H(+) = [[Fe-S] cluster scaffold protein] + N(6)-[(R)-dihydrolipoyl]-L-lysyl-[protein] + 4 Fe(3+) + 2 hydrogen sulfide + 2 5'-deoxyadenosine + 2 L-methionine + 2 reduced [2Fe-2S]-[ferredoxin]. The protein operates within protein modification; protein lipoylation via endogenous pathway; protein N(6)-(lipoyl)lysine from octanoyl-[acyl-carrier-protein]: step 2/2. Functionally, catalyzes the radical-mediated insertion of two sulfur atoms into the C-6 and C-8 positions of the octanoyl moiety bound to the lipoyl domains of lipoate-dependent enzymes, thereby converting the octanoylated domains into lipoylated derivatives. In Prochlorococcus marinus (strain MIT 9215), this protein is Lipoyl synthase.